The primary structure comprises 668 residues: Pentatricopeptide repeat-containing protein CRP1, chloroplastic (668 aa).

Residues 1–64 constitute a chloroplast transit peptide; sequence MPASLLPPTF…SASLTSPSPP (64 aa). PPR repeat units follow at residues 154–188, 189–226, 227–261, 262–297, 298–332, 333–367, 368–402, 403–437, 438–472, 473–507, 508–542, 543–577, 578–612, and 613–647; these read SPLL…DFLP, DLAS…RLEP, DAPL…GLTP, RSNA…EIKP, RTRA…GVAP, DEAT…GVKP, SSYV…GVRP, DRHF…GIEP, DVVT…NCPP, GTTT…GLVP, NIIT…GLKP, SPTM…GLEV, SILV…GLRP, and DVIT…GCAP.

This sequence belongs to the PPR family. P subfamily. As to quaternary structure, component of a multisubunit complex.

It localises to the plastid. Its subcellular location is the chloroplast stroma. Required for the translation of the chloroplast petA and petD mRNAs. Required for the processing of the petD mRNA from a polycistronic precursor. Binds with high affinity to the 5'-UTR of the chloroplastic petA transcript. Activates psaC and petA translation by binding their 5'-UTRs. In Zea mays (Maize), this protein is Pentatricopeptide repeat-containing protein CRP1, chloroplastic.